The following is a 342-amino-acid chain: tRNA N6-adenosine threonylcarbamoyltransferase (342 aa).

Residues histidine 115 and histidine 119 each coordinate Fe cation. Substrate is bound by residues 138–142 (LVSGG), aspartate 171, glycine 184, and asparagine 276. Residue aspartate 304 participates in Fe cation binding.

The protein belongs to the KAE1 / TsaD family. It depends on Fe(2+) as a cofactor.

It is found in the cytoplasm. The enzyme catalyses L-threonylcarbamoyladenylate + adenosine(37) in tRNA = N(6)-L-threonylcarbamoyladenosine(37) in tRNA + AMP + H(+). Functionally, required for the formation of a threonylcarbamoyl group on adenosine at position 37 (t(6)A37) in tRNAs that read codons beginning with adenine. Is involved in the transfer of the threonylcarbamoyl moiety of threonylcarbamoyl-AMP (TC-AMP) to the N6 group of A37, together with TsaE and TsaB. TsaD likely plays a direct catalytic role in this reaction. This Dichelobacter nodosus (strain VCS1703A) protein is tRNA N6-adenosine threonylcarbamoyltransferase.